The chain runs to 277 residues: C2H2-type zinc-finger transcription factor (277 aa).

Disordered regions lie at residues 23-66 (PTMN…AHPP) and 78-146 (MNEP…TDSI). A compositionally biased stretch (polar residues) spans 27-37 (EIETTDNTYPR). A C2H2-type; degenerate zinc finger spans residues 185–208 (HPCPDCGRVFTRSTARNFHRQSGT).

This sequence belongs to the GLI C2H2-type zinc-finger protein family.

It is found in the nucleus. In terms of biological role, C2H2-type zinc-finger transcription factor that controls the expression of the nonribosomal peptide synthases inpA and inpB, as well as of the other inp cluster-associated genes. Also mediates the expression of the asperfuranone biosynthesis gene cluster by binding to the afoA promoter. Probably recognizes the 5'-CT/C/AAAAGGAT/AT/GG/CA-3' motif in the promoters of teget genes. In Emericella nidulans (strain FGSC A4 / ATCC 38163 / CBS 112.46 / NRRL 194 / M139) (Aspergillus nidulans), this protein is C2H2-type zinc-finger transcription factor.